The following is a 63-amino-acid chain: Large ribosomal subunit protein bL28 (63 aa).

The protein belongs to the bacterial ribosomal protein bL28 family.

This is Large ribosomal subunit protein bL28 from Clostridium perfringens (strain ATCC 13124 / DSM 756 / JCM 1290 / NCIMB 6125 / NCTC 8237 / Type A).